Reading from the N-terminus, the 584-residue chain is MKNIKNMKNIKSEGFIFFVLVFFICIIFGCIYESLHEGPYKKTLNSLHESTKYRHFNKIRLLTEYKDTLQIKVEQKSLRDYVNNDRYNNVNTNDYTSYKDKGEQFNDTICVVDKKKENVTINNEEECNKNFYQYLQYLEHNNKQDNKYEETNYFLQGNDKHIDSEHNGINKMYKETIHKTLTSDVSTENSYTHNNSRDDEPQNGKRTYNNQSNNNLPYDNSSYNISPYHGPNNNVPYNKSNNFEQCNTQDNKHCNDLDTYHTCYGPDNYPQKYDNYRQECDNYRQECDNYRQEYDNYPQKYDNYRQECDNYRQEYDNYPHGFDNYPRGFDNYPHGYDNHPHRPHIYPHGFDNHPHRPHMYPHNFPMRNESVGGPYYRPPHIIERSNYYKNPKKAPHNMMLPCDTMKDNKSICDEQNFQRELEKIIKKNNLQNGNIRDNHDTRINDYNKRLTEYNKRLTEYNKRLTEYTKRLNEHYKRNGYNIQNRQNSIERAQSNDVVLYGHNFQNAFRYKQNTRSYYPHVNSNEATHHQKTMYFTQQNNYSREEYPIKSEQHLYHVKSKRLEKKLYDYQNGTNPVTNFLERHF.

The helical transmembrane segment at 15–35 threads the bilayer; sequence FIFFVLVFFICIIFGCIYESL. Composition is skewed to polar residues over residues 184 to 194 and 204 to 225; these read DVSTENSYTHN and GKRTYNNQSNNNLPYDNSSYNI. Residues 184–226 form a disordered region; sequence DVSTENSYTHNNSRDDEPQNGKRTYNNQSNNNLPYDNSSYNIS. Coiled coils occupy residues 267 to 319 and 436 to 477; these read DNYP…DNYP and RDNH…HYKR.

It localises to the membrane. This is an uncharacterized protein from Plasmodium falciparum (isolate 3D7).